A 437-amino-acid chain; its full sequence is Serine hydroxymethyltransferase (437 aa).

(6S)-5,6,7,8-tetrahydrofolate contacts are provided by residues L130 and 134 to 136 (GHL). K239 carries the N6-(pyridoxal phosphate)lysine modification.

It belongs to the SHMT family. As to quaternary structure, homodimer. The cofactor is pyridoxal 5'-phosphate.

It is found in the cytoplasm. The enzyme catalyses (6R)-5,10-methylene-5,6,7,8-tetrahydrofolate + glycine + H2O = (6S)-5,6,7,8-tetrahydrofolate + L-serine. Its pathway is one-carbon metabolism; tetrahydrofolate interconversion. It participates in amino-acid biosynthesis; glycine biosynthesis; glycine from L-serine: step 1/1. Its function is as follows. Catalyzes the reversible interconversion of serine and glycine with tetrahydrofolate (THF) serving as the one-carbon carrier. This reaction serves as the major source of one-carbon groups required for the biosynthesis of purines, thymidylate, methionine, and other important biomolecules. Also exhibits THF-independent aldolase activity toward beta-hydroxyamino acids, producing glycine and aldehydes, via a retro-aldol mechanism. This Bartonella quintana (strain Toulouse) (Rochalimaea quintana) protein is Serine hydroxymethyltransferase.